A 315-amino-acid polypeptide reads, in one-letter code: tRNA-cytidine(32) 2-sulfurtransferase (315 aa).

The PP-loop motif signature appears at 39–44 (SGGKDS). Residues C114, C117, and C205 each contribute to the [4Fe-4S] cluster site.

This sequence belongs to the TtcA family. In terms of assembly, homodimer. Mg(2+) serves as cofactor. It depends on [4Fe-4S] cluster as a cofactor.

The protein resides in the cytoplasm. The enzyme catalyses cytidine(32) in tRNA + S-sulfanyl-L-cysteinyl-[cysteine desulfurase] + AH2 + ATP = 2-thiocytidine(32) in tRNA + L-cysteinyl-[cysteine desulfurase] + A + AMP + diphosphate + H(+). It functions in the pathway tRNA modification. Catalyzes the ATP-dependent 2-thiolation of cytidine in position 32 of tRNA, to form 2-thiocytidine (s(2)C32). The sulfur atoms are provided by the cysteine/cysteine desulfurase (IscS) system. The polypeptide is tRNA-cytidine(32) 2-sulfurtransferase (Ralstonia pickettii (strain 12J)).